The following is a 348-amino-acid chain: Protein RecA (348 aa).

ATP is bound at residue 67–74 (GPESSGKT).

Belongs to the RecA family.

The protein localises to the cytoplasm. Functionally, can catalyze the hydrolysis of ATP in the presence of single-stranded DNA, the ATP-dependent uptake of single-stranded DNA by duplex DNA, and the ATP-dependent hybridization of homologous single-stranded DNAs. It interacts with LexA causing its activation and leading to its autocatalytic cleavage. The polypeptide is Protein RecA (Salinispora tropica (strain ATCC BAA-916 / DSM 44818 / JCM 13857 / NBRC 105044 / CNB-440)).